We begin with the raw amino-acid sequence, 463 residues long: ATP synthase subunit beta (463 aa).

152–159 (GGAGVGKT) is an ATP binding site.

The protein belongs to the ATPase alpha/beta chains family. As to quaternary structure, F-type ATPases have 2 components, CF(1) - the catalytic core - and CF(0) - the membrane proton channel. CF(1) has five subunits: alpha(3), beta(3), gamma(1), delta(1), epsilon(1). CF(0) has three main subunits: a(1), b(2) and c(9-12). The alpha and beta chains form an alternating ring which encloses part of the gamma chain. CF(1) is attached to CF(0) by a central stalk formed by the gamma and epsilon chains, while a peripheral stalk is formed by the delta and b chains.

It is found in the cell inner membrane. The enzyme catalyses ATP + H2O + 4 H(+)(in) = ADP + phosphate + 5 H(+)(out). Functionally, produces ATP from ADP in the presence of a proton gradient across the membrane. The catalytic sites are hosted primarily by the beta subunits. This is ATP synthase subunit beta from Shewanella putrefaciens (strain CN-32 / ATCC BAA-453).